The following is a 412-amino-acid chain: Protein MITOFERRINLIKE 1, chloroplastic (412 aa).

The transit peptide at 1 to 92 (MEARLSETLG…PGPEFLKWIK (92 aa)) directs the protein to the chloroplast. The interval 43 to 83 (VRNPKLKTKSSQKPPKFSANFRRSDPPFASTSISDPTHEKP) is disordered. Solcar repeat units lie at residues 112 to 198 (ERAI…GKSL), 206 to 288 (PTVL…LKAA), and 298 to 392 (LEPL…ARLT). Transmembrane regions (helical) follow at residues 115 to 135 (IIGA…LLPL), 167 to 187 (ILGF…SSAV), 208 to 228 (VLIP…IMVP), 262 to 282 (AGYS…YSSF), 303 to 323 (SVCC…PLDV), and 365 to 385 (TRGM…GYFA).

It belongs to the mitochondrial carrier (TC 2.A.29) family. As to expression, expressed in leaves, developing flowers and siliques.

The protein localises to the plastid. It is found in the chloroplast inner membrane. Probably involved in iron transport into chloroplasts. The chain is Protein MITOFERRINLIKE 1, chloroplastic (MFL1) from Arabidopsis thaliana (Mouse-ear cress).